Here is a 437-residue protein sequence, read N- to C-terminus: Photosystem II stability/assembly factor HCF136, chloroplastic (437 aa).

The protein belongs to the Ycf48 family.

The protein resides in the plastid. The protein localises to the chloroplast thylakoid membrane. In terms of biological role, essential for photosystem II (PSII) biogenesis; required for assembly of an early intermediate in PSII assembly that includes D2 (psbD) and cytochrome b559. The polypeptide is Photosystem II stability/assembly factor HCF136, chloroplastic (Cyanidioschyzon merolae (strain NIES-3377 / 10D) (Unicellular red alga)).